Here is a 246-residue protein sequence, read N- to C-terminus: Protein phosphatase PhpP (246 aa).

The PPM-type phosphatase domain occupies 2–240; that stretch reads EISLLTDVGQ…DNITVALVSM (239 aa). Mn(2+) is bound by residues Asp36, Gly37, Asp192, and Asp231.

Belongs to the PP2C family. The cofactor is Mn(2+).

Its subcellular location is the cytoplasm. The catalysed reaction is O-phospho-L-seryl-[protein] + H2O = L-seryl-[protein] + phosphate. It carries out the reaction O-phospho-L-threonyl-[protein] + H2O = L-threonyl-[protein] + phosphate. Its function is as follows. Protein phosphatase able to dephosphorylate StkP-P and other phosphorylated protein substrates. PhpP and its cognate protein kinase StkP appear to constitute a functional signaling couple in vivo, PhpP's primary role being probably to control phosphorylation levels of StkP and of its targets. PhpP thus performs an essential control of StkP activity. Also dephosphorylates DivIVA in vivo. This is Protein phosphatase PhpP (phpP) from Streptococcus pneumoniae serotype 2 (strain D39 / NCTC 7466).